A 1008-amino-acid chain; its full sequence is Pheromone-regulated membrane protein 10 (1008 aa).

3 disordered regions span residues 1–273 (MSQS…TFLG), 342–384 (KLPE…FYTP), and 477–506 (KNDF…TQDE). Positions 70–85 (DTIISNASTTNNSSSD) are enriched in low complexity. Residues 95–111 (GENSNLPNFNFSANQVH) are compositionally biased toward polar residues. Acidic residues-rich tracts occupy residues 116–132 (ANED…EDTF) and 143–161 (GSDE…EDKE). The span at 162–186 (EVVNEKEEIADDLHSKSSKTSRESK) shows a compositional bias: basic and acidic residues. Positions 188 to 204 (FNAGTKNSRRSLNSLQR) are enriched in polar residues. Over residues 205–214 (NETDVTDQLK) the composition is skewed to basic and acidic residues. Residues 215-225 (RTTSTTSSSKR) are compositionally biased toward low complexity. Basic and acidic residues predominate over residues 226 to 239 (SNSDKRTGFKDILR). The span at 346-364 (GTSSDQQLDYSDTSASNLI) shows a compositional bias: polar residues. Over residues 483 to 498 (GPKRMANKIPGRKHGA) the composition is skewed to basic residues. The next 10 helical transmembrane spans lie at 683 to 703 (SPWL…PFAF), 707 to 727 (WYDV…QFFV), 736 to 756 (SVFE…IGSI), 762 to 782 (FCFS…YIIL), 800 to 820 (MFYA…GASL), 838 to 858 (IKQD…LGLI), 866 to 886 (LPIM…AGKH), 892 to 912 (VTEF…NLYS), 917 to 937 (GMAV…GIAS), and 978 to 998 (VKVS…VYPF).

It belongs to the ThrE exporter (TC 2.A.79) family.

It localises to the membrane. The protein is Pheromone-regulated membrane protein 10 of Debaryomyces hansenii (strain ATCC 36239 / CBS 767 / BCRC 21394 / JCM 1990 / NBRC 0083 / IGC 2968) (Yeast).